The primary structure comprises 362 residues: Tyrosyl-DNA phosphodiesterase 2 (362 aa).

Methionine 1 is modified (N-acetylmethionine). Positions methionine 1–proline 20 are disordered. Residues lysine 23 and lysine 82 each participate in a glycyl lysine isopeptide (Lys-Gly) (interchain with G-Cter in SUMO2) cross-link. The segment at leucine 87 to glutamate 109 is disordered. Residues threonine 88 and threonine 92 each carry the phosphothreonine; by ACVR1B modification. The span at aspartate 94–glutamate 109 shows a compositional bias: polar residues. Serine 95 carries the post-translational modification Phosphoserine. Residues asparagine 120–leucine 124 are interaction with 5' end of substrate DNA. Residues aspartate 122 and glutamate 152 each coordinate Mg(2+). The interaction with 5' end of substrate DNA stretch occupies residues histidine 226–arginine 231. Aspartate 262 (proton donor/acceptor) is an active-site residue. The segment at asparagine 264–arginine 266 is interaction with 5' end of substrate DNA.

It belongs to the CCR4/nocturin family. Interacts with TRAF2, TRAF3, TRAF5, TRAF6, TNFRSF8/CD30, TNFRSF5/CD40, TNFRSF1B/TNF-R75, ETS1, ETS2, FLI1, SMAD3 and ACVR1B/ALK4. In terms of assembly, (Microbial infection) Interacts with Hantaan hantavirus nucleoprotein. As to quaternary structure, (Microbial infection) Interacts with Seoul hantavirus nucleoprotein. Requires Mg(2+) as cofactor. The cofactor is Mn(2+). In terms of processing, ubiquitinated by TRAF6. In terms of tissue distribution, widely expressed. Highly expressed in various brain regions, including the frontal and occipital lobes, the hippocampus, the striatum and the cerebellum.

It is found in the nucleus. Its subcellular location is the PML body. The protein localises to the nucleolus. It localises to the cytoplasm. Functionally, DNA repair enzyme that can remove a variety of covalent adducts from DNA through hydrolysis of a 5'-phosphodiester bond, giving rise to DNA with a free 5' phosphate. Catalyzes the hydrolysis of dead-end complexes between DNA and the topoisomerase 2 (TOP2) active site tyrosine residue. The 5'-tyrosyl DNA phosphodiesterase activity can enable the repair of TOP2-induced DNA double-strand breaks/DSBs without the need for nuclease activity, creating a 'clean' DSB with 5'-phosphate termini that are ready for ligation. Thereby, protects the transcription of many genes involved in neurological development and maintenance from the abortive activity of TOP2. Hydrolyzes 5'-phosphoglycolates on protruding 5' ends on DSBs due to DNA damage by radiation and free radicals. Has preference for single-stranded DNA or duplex DNA with a 4 base pair overhang as substrate. Acts as a regulator of ribosome biogenesis following stress. Also has 3'-tyrosyl DNA phosphodiesterase activity, but less efficiently and much slower than TDP1. Constitutes the major if not only 5'-tyrosyl-DNA phosphodiesterase in cells. Also acts as an adapter by participating in the specific activation of MAP3K7/TAK1 in response to TGF-beta: associates with components of the TGF-beta receptor-TRAF6-TAK1 signaling module and promotes their ubiquitination dependent complex formation. Involved in non-canonical TGF-beta induced signaling routes. May also act as a negative regulator of ETS1 and may inhibit NF-kappa-B activation. In terms of biological role, (Microbial infection) Used by picornaviruses to remove the small polypeptide, VPg (virus Protein genome-linked, the primer for viral RNA synthesis), from the genomic RNA of the virus. Acts as a 5'-tyrosyl RNA phosphodiesterase and cleaves the covalent VPg-Tyr-RNA bond. This cleavage would play a role in viral replication and occur in viral replication vesicles, but would not act on viral mRNA. The sequence is that of Tyrosyl-DNA phosphodiesterase 2 from Homo sapiens (Human).